Reading from the N-terminus, the 258-residue chain is Aspartate/glutamate leucyltransferase (258 aa).

The protein belongs to the R-transferase family. Bpt subfamily.

It localises to the cytoplasm. It carries out the reaction N-terminal L-glutamyl-[protein] + L-leucyl-tRNA(Leu) = N-terminal L-leucyl-L-glutamyl-[protein] + tRNA(Leu) + H(+). It catalyses the reaction N-terminal L-aspartyl-[protein] + L-leucyl-tRNA(Leu) = N-terminal L-leucyl-L-aspartyl-[protein] + tRNA(Leu) + H(+). In terms of biological role, functions in the N-end rule pathway of protein degradation where it conjugates Leu from its aminoacyl-tRNA to the N-termini of proteins containing an N-terminal aspartate or glutamate. The polypeptide is Aspartate/glutamate leucyltransferase (Rhodopseudomonas palustris (strain BisA53)).